The sequence spans 56 residues: Large ribosomal subunit protein bL33 (56 aa).

This sequence belongs to the bacterial ribosomal protein bL33 family.

This is Large ribosomal subunit protein bL33 from Tropheryma whipplei (strain TW08/27) (Whipple's bacillus).